The chain runs to 323 residues: Acetyl-coenzyme A carboxylase carboxyl transferase subunit alpha 1 (323 aa).

The region spanning 39–293 (RLSKKSQQLT…RRALGDSLRQ (255 aa)) is the CoA carboxyltransferase C-terminal domain.

Belongs to the AccA family. As to quaternary structure, acetyl-CoA carboxylase is a heterohexamer composed of biotin carboxyl carrier protein (AccB), biotin carboxylase (AccC) and two subunits each of ACCase subunit alpha (AccA) and ACCase subunit beta (AccD).

Its subcellular location is the cytoplasm. The enzyme catalyses N(6)-carboxybiotinyl-L-lysyl-[protein] + acetyl-CoA = N(6)-biotinyl-L-lysyl-[protein] + malonyl-CoA. It participates in lipid metabolism; malonyl-CoA biosynthesis; malonyl-CoA from acetyl-CoA: step 1/1. Component of the acetyl coenzyme A carboxylase (ACC) complex. First, biotin carboxylase catalyzes the carboxylation of biotin on its carrier protein (BCCP) and then the CO(2) group is transferred by the carboxyltransferase to acetyl-CoA to form malonyl-CoA. Its function is as follows. Does not confer resistance to the endogenous polyketide antibiotic thailandamide, does not confer resistance to thailandamide when expressed in S.typhimurium. The polypeptide is Acetyl-coenzyme A carboxylase carboxyl transferase subunit alpha 1 (Burkholderia thailandensis (strain ATCC 700388 / DSM 13276 / CCUG 48851 / CIP 106301 / E264)).